Reading from the N-terminus, the 548-residue chain is SH2B adapter protein 3 (548 aa).

The span at 1–11 (MNEPTVQPSRT) shows a compositional bias: polar residues. Disordered stretches follow at residues 1-25 (MNEPTVQPSRTSSAPASPASPRGWS), 78-108 (SLAGPPGHDYRATAPPRPALPKARSSEDLGP), and 128-160 (RSAGELPGATSDTNDIDTTAASRPGPARKLLPW). The segment covering 12-21 (SSAPASPASP) has biased composition (low complexity). Residues Ser13, Ser102, and Ser129 each carry the phosphoserine modification. Polar residues predominate over residues 137–148 (TSDTNDIDTTAA). In terms of domain architecture, PH spans 168–279 (EALKEVVLRY…WLAELRASTG (112 aa)). The disordered stretch occupies residues 290 to 313 (PLSLAAEPGPARSPRGSTDSLDQG). Ser302 is subject to Phosphoserine. Residues 336-434 (WFHGPISRVR…ACDVRLSGYV (99 aa)) enclose the SH2 domain.

The protein belongs to the SH2B adapter family. Post-translationally, tyrosine phosphorylated.

Its function is as follows. Links T-cell receptor activation signal to phospholipase C-gamma-1, GRB2 and phosphatidylinositol 3-kinase. This Mus musculus (Mouse) protein is SH2B adapter protein 3 (Sh2b3).